A 128-amino-acid chain; its full sequence is Sulfurtransferase TusD (128 aa).

The active-site Cysteine persulfide intermediate is the Cys78.

This sequence belongs to the DsrE/TusD family. In terms of assembly, heterohexamer, formed by a dimer of trimers. The hexameric TusBCD complex contains 2 copies each of TusB, TusC and TusD. The TusBCD complex interacts with TusE.

The protein resides in the cytoplasm. Part of a sulfur-relay system required for 2-thiolation of 5-methylaminomethyl-2-thiouridine (mnm(5)s(2)U) at tRNA wobble positions. Accepts sulfur from TusA and transfers it in turn to TusE. In Escherichia coli O17:K52:H18 (strain UMN026 / ExPEC), this protein is Sulfurtransferase TusD.